The following is a 377-amino-acid chain: UPF0754 membrane protein lwe2241 (377 aa).

Helical transmembrane passes span 1 to 21 and 357 to 377; these read MSVL…GAMT and YLGG…AIWI.

The protein belongs to the UPF0754 family.

The protein resides in the cell membrane. In Listeria welshimeri serovar 6b (strain ATCC 35897 / DSM 20650 / CCUG 15529 / CIP 8149 / NCTC 11857 / SLCC 5334 / V8), this protein is UPF0754 membrane protein lwe2241.